An 882-amino-acid chain; its full sequence is Protein O-mannosyl-transferase TMTC1 (882 aa).

Over 1–20 (MVVTTSARGGGGDRTPSRRR) the chain is Cytoplasmic. The disordered stretch occupies residues 1-20 (MVVTTSARGGGGDRTPSRRR). The chain crosses the membrane as a helical span at residues 21–41 (GCGLAPAGAAALLAGASCLCY). At 42-110 (GRSLQGEFVH…KLNIFLTGMN (69 aa)) the chain is on the extracellular side. N86 carries N-linked (GlcNAc...) asparagine glycosylation. The chain crosses the membrane as a helical span at residues 111-131 (PFYFHAVNIILHCLVTLVLMY). The Cytoplasmic segment spans residues 132-137 (TCDKTV). Residues 138 to 157 (FKNRGLAFVTALLFAVHPIH) traverse the membrane as a helical segment. The Extracellular portion of the chain corresponds to 158–160 (TEA). Residues 161–181 (VAGIVGRADVLACLLFLLAFL) form a helical membrane-spanning segment. Over 182-197 (SYNRSLDQGCVGGSFP) the chain is Cytoplasmic. Residues 198 to 218 (STVSPFFLLLSLFLGTCAMLV) form a helical membrane-spanning segment. The Extracellular portion of the chain corresponds to 219–221 (KET). A helical membrane pass occupies residues 222–238 (GITVFGVCLVYDLFSLS). Residues 239–313 (NKQDKSSNGA…SPRAVWSMMR (75 aa)) lie on the Cytoplasmic side of the membrane. The segment at 246 to 277 (NGALCPRSPQQPGSPQPSSLPGHPHRENGKQQ) is disordered. Residues 251–267 (PRSPQQPGSPQPSSLPG) show a composition bias toward low complexity. The helical transmembrane segment at 314–334 (FLTYSYLLAFNVWLLLAPVTL) threads the bilayer. Topologically, residues 335–354 (CYDWQVGSIPLVETIWDMRN) are extracellular. A helical transmembrane segment spans residues 355–375 (LATIFLAVVMALLSLHCLAAF). Topologically, residues 376 to 381 (KRLEHK) are cytoplasmic. Residues 382-402 (EVLVGLLFLVFPFIPASNLFF) form a helical membrane-spanning segment. Residue R403 is a topological domain, extracellular. The helical transmembrane segment at 404-424 (VGFVVAERVLYMPSMGYCILF) threads the bilayer. Residues 425–438 (VHGLSKLCTWLNRC) are Cytoplasmic-facing. Residues 439-459 (GATTLIVSTVLLLLLFSWKTV) traverse the membrane as a helical segment. At 460–882 (KQNEIWLSRE…LQEVREKDQT (423 aa)) the chain is on the extracellular side. TPR repeat units follow at residues 483–516 (AKVH…YPRH), 517–547 (ASAL…HPQH), 548–581 (NRAL…GPEF), 582–615 (ADAY…CPDS), 616–649 (SDLH…SPSH), 650–682 (HVAM…VAHK), 683–716 (AEIL…QPSQ), 751–784 (LECY…KPKD), 789–822 (SELF…NPDQ), and 823–856 (AQAW…VPDS).

It belongs to the TMTC family. As to quaternary structure, may interact with FAM168B.

It localises to the membrane. The protein resides in the endoplasmic reticulum. It catalyses the reaction a di-trans,poly-cis-dolichyl beta-D-mannosyl phosphate + L-seryl-[protein] = 3-O-(alpha-D-mannosyl)-L-seryl-[protein] + a di-trans,poly-cis-dolichyl phosphate + H(+). It carries out the reaction a di-trans,poly-cis-dolichyl beta-D-mannosyl phosphate + L-threonyl-[protein] = 3-O-(alpha-D-mannosyl)-L-threonyl-[protein] + a di-trans,poly-cis-dolichyl phosphate + H(+). The protein operates within protein modification; protein glycosylation. Its function is as follows. Transfers mannosyl residues to the hydroxyl group of serine or threonine residues. The 4 members of the TMTC family are O-mannosyl-transferases dedicated primarily to the cadherin superfamily, each member seems to have a distinct role in decorating the cadherin domains with O-linked mannose glycans at specific regions. Also acts as O-mannosyl-transferase on other proteins such as PDIA3. This is Protein O-mannosyl-transferase TMTC1 from Homo sapiens (Human).